The chain runs to 423 residues: MSTREYDDLSHAFAGAGGGLLSMTLTYPLVTLTTHAQTMVKLKKDQEKEKENSNEDGSLSPKSSNTSDVSQKKISQFEILKKILKDQGAKGLYNGLESALFGIAVTNFVYYYFYELTGKTLNRRSNPQTASNSKKVALKKGLSVWQSMAAGAVAGTISRVATNPIWVANTRMTILSKNQGKLGKLNTIEAIIYILKNEGWQKLFTGIVPALFLVLNPIIQYTIFEQLKSFIVKIKKRNITPVDALLLGAFGKLIATIITYPYITLRSRMHVKSMTEISEDVEKERTDSVQSLPEDGSDEDNLKENSAKSPYAETITKIISKLPSPIVSMFTLGYGMYKEEGVSSFYRGLSVKLLQSILNAAFLFYFKEELLILSDGIIKSTKRATGLANNPYNAKDVIHSFEKALSMRSPRTRTTTVASSAKE.

3 Solcar repeats span residues 6–120 (YDDL…TGKT), 142–230 (LSVW…LKSF), and 239–373 (ITPV…LLIL). A helical transmembrane segment spans residues 12 to 32 (AFAGAGGGLLSMTLTYPLVTL). Positions 43–53 (KKDQEKEKENS) are enriched in basic and acidic residues. Residues 43 to 70 (KKDQEKEKENSNEDGSLSPKSSNTSDVS) form a disordered region. Residues 55-70 (EDGSLSPKSSNTSDVS) are compositionally biased toward polar residues. The next 4 membrane-spanning stretches (helical) occupy residues 98–118 (SALF…ELTG), 148–168 (MAAG…IWVA), 204–224 (FTGI…YTIF), and 245–265 (LLLG…YITL). The disordered stretch occupies residues 278-308 (SEDVEKERTDSVQSLPEDGSDEDNLKENSAK). A helical membrane pass occupies residues 353-373 (LLQSILNAAFLFYFKEELLIL).

Belongs to the mitochondrial carrier (TC 2.A.29) family.

It is found in the peroxisome membrane. May have transport activity. In Candida boidinii (Yeast), this protein is Peroxisomal membrane protein PMP47A (PMP47A).